The following is a 450-amino-acid chain: Glucose-6-phosphate isomerase (450 aa).

Thr38 is modified (phosphothreonine). The active-site Proton donor is Glu290. Residues His311 and Lys425 contribute to the active site.

The protein belongs to the GPI family.

The protein resides in the cytoplasm. It catalyses the reaction alpha-D-glucose 6-phosphate = beta-D-fructose 6-phosphate. Its pathway is carbohydrate biosynthesis; gluconeogenesis. It functions in the pathway carbohydrate degradation; glycolysis; D-glyceraldehyde 3-phosphate and glycerone phosphate from D-glucose: step 2/4. Its function is as follows. Catalyzes the reversible isomerization of glucose-6-phosphate to fructose-6-phosphate. The sequence is that of Glucose-6-phosphate isomerase from Bacillus subtilis (strain 168).